Reading from the N-terminus, the 1114-residue chain is WD repeat-containing protein 72 (1114 aa).

7 WD repeats span residues 15 to 54 (APPH…KISA), 60 to 102 (GHSA…CVEK), 160 to 197 (KCMC…NSIQ), 327 to 373 (EENK…SKFD), 413 to 452 (GMTA…KAGL), 470 to 515 (GHHQ…ILHT), and 566 to 605 (KHLF…LERH). 2 disordered regions span residues 634 to 658 (SETH…VPCP) and 749 to 798 (SLQT…PPRK). Residues 780 to 796 (KRQKKMKSSKKAHPKPP) show a composition bias toward basic residues. Ser-1093 and Ser-1095 each carry phosphoserine.

In terms of tissue distribution, expressed in maturation stage ameloblasts (at protein level).

It localises to the cytoplasmic vesicle. In terms of biological role, plays a major role in formation of tooth enamel. Specifically required during the maturation phase of amelogenesis for normal formation of the enamel matrix and clearance of enamel proteins. May be involved in localization of the calcium transporter SLC24A4 to the ameloblast cell membrane. The protein is WD repeat-containing protein 72 of Mus musculus (Mouse).